The following is a 311-amino-acid chain: Methionyl-tRNA formyltransferase (311 aa).

108–111 (SILP) serves as a coordination point for (6S)-5,6,7,8-tetrahydrofolate.

This sequence belongs to the Fmt family.

It carries out the reaction L-methionyl-tRNA(fMet) + (6R)-10-formyltetrahydrofolate = N-formyl-L-methionyl-tRNA(fMet) + (6S)-5,6,7,8-tetrahydrofolate + H(+). Functionally, attaches a formyl group to the free amino group of methionyl-tRNA(fMet). The formyl group appears to play a dual role in the initiator identity of N-formylmethionyl-tRNA by promoting its recognition by IF2 and preventing the misappropriation of this tRNA by the elongation apparatus. The sequence is that of Methionyl-tRNA formyltransferase from Sorangium cellulosum (strain So ce56) (Polyangium cellulosum (strain So ce56)).